Here is a 418-residue protein sequence, read N- to C-terminus: 1-acylglycerol-3-phosphate O-acyltransferase (418 aa).

An AB hydrolase-1 domain is found at 121–251 (PTLVMVHGYG…RATWKGAVLN (131 aa)). The GXSXG motif lies at 197 to 201 (GHSFG). The HXXXXD motif motif lies at 379-384 (HFVFID).

Belongs to the peptidase S33 family. ABHD4/ABHD5 subfamily.

The protein localises to the cytoplasm. It catalyses the reaction a 1-acyl-sn-glycero-3-phosphate + an acyl-CoA = a 1,2-diacyl-sn-glycero-3-phosphate + CoA. Functionally, lysophosphatidic acid acyltransferase which functions in phosphatidic acid biosynthesis. Is highly specific for lysophosphatidic acid and able to use different acyl-CoA donors. May regulate neutral lipid accumulation and participate in the regulation of lipid turnover in vegetative cells. Possesses additional triacylglycerol lipase and phospholipase A2 activities in vitro. Is not active as esterase or lysophospholipase. In Arabidopsis thaliana (Mouse-ear cress), this protein is 1-acylglycerol-3-phosphate O-acyltransferase.